The chain runs to 264 residues: Versicolorin reductase stcU (264 aa).

NADP(+)-binding residues include Ile23, Asp69, Asn96, and Arg129. Active-site proton donor residues include Ser145 and Ser146. The NADP(+) site is built by Tyr160, Lys164, Ile193, and Thr195. Tyr160 functions as the Proton acceptor in the catalytic mechanism. Lys164 serves as the catalytic Lowers pKa of active site Tyr.

This sequence belongs to the short-chain dehydrogenases/reductases (SDR) family.

The enzyme catalyses (4S,8R)-2,13,16,20-tetrahydroxy-7,9-dioxapentacyclo[10.8.0.0(3,10).0(4,8).0(14,19)]icosa-1(12),2,5,10,13,16,19-heptaen-18-one + NADPH + H(+) = (4S,8R,16R)-2,13,16,20-tetrahydroxy-7,9-dioxapentacyclo[10.8.0.0(3,10).0(4,8).0(14,19)]icosa-1(12),2,5,10,13,19-hexaen-18-one + NADP(+). It functions in the pathway mycotoxin biosynthesis; sterigmatocystin biosynthesis. Its function is as follows. Versicolorin reductase; part of the gene cluster that mediates the biosynthesis of sterigmatocystin (ST), a polyketide-derived furanocoumarin which is part of the most toxic and carcinogenic compounds among the known mycotoxins. The first step in the biosynthesis of sterigmatocystin is the production of hexanoate by the fatty acid synthase (FAS) units stcJ and stcK. The polyketide backbone is assembled by the non-reducing polyketide synthase stcA by condensation of the starter hexanoyl-CoA and 7 malonyl-CoA extender units followed by cyclization and release of norsolorinic acid. Norsolorinic acid is the first stable intermediate in the biosynthesis of sterigmatocystin and is converted into averantin (AVN) by the ketoreductase stcE which reduces the hexanoate ketone to an alcohol. Averantin is then oxidized into 5'-hydroxyaverantin (HAVN) by the cytochrome P450 monooxygenase stcF. 5'-hydroxyaverantin is further converted to 5'-oxyaverantin (OAVN) by the 5'-hydroxyaverantin dehydrogenase stcG. The next step is the conversion of OAVN into averufin (AVF) which is catalyzed by a yet to be identified enzyme. The cytochrome P450 monooxygenase stcB and the flavin-binding monooxygenase stcW are both required for the conversion of averufin to 1-hydroxyversicolorone. The esterase stcI probably catalyzes the formation of versiconal hemiacetal acetate from 1-hydroxyversicolorone. The oxydoreductase stcN then probably catalyzes the biosynthetic step from versiconal to versicolorin B (VERB). The next step is performed by the versicolorin B desaturase stcL to produce versicolorin A (VERA). The ketoreductase stcU and the cytochrome P450 monooxygenase stcS are involved in the conversion of versicolorin A to demethylsterigmatocystin. The Baeyer-Villiger oxidas stcQ and the reductase stcR might be involved in the biosynthetic step from versicolorin A to demethylsterigmatocystin. The final step in the biosynthesis of sterigmatocystin is the methylation of demethylsterigmatocystin catalyzed by the methyltransferase stcP. In Emericella nidulans (strain FGSC A4 / ATCC 38163 / CBS 112.46 / NRRL 194 / M139) (Aspergillus nidulans), this protein is Versicolorin reductase stcU.